A 618-amino-acid chain; its full sequence is Rho guanine nucleotide exchange factor 25 (618 aa).

2 disordered regions span residues 26 to 63 (CAVP…REPE) and 169 to 193 (GPGD…EEQK). A DH domain is found at 199–375 (RSMFVLGELV…CFVPKRCNDM (177 aa)). The important for binding to Rho GTPases stretch occupies residues 317-338 (LGHRLQLNDLLIKPVQRIMKYQ). Residues 387-505 (KLTAQGKLLG…WIKQVAQILE (119 aa)) enclose the PH domain. Residues 506-532 (SQRDFLNALQSPIEYQRRESQTNSLGR) are sufficient to bind activated GNAQ. Disordered stretches follow at residues 521 to 556 (QRRE…SMHT) and 584 to 604 (ALSD…VNTP). Over residues 584–593 (ALSDTPQTPH) the composition is skewed to polar residues.

Interacts with activated GNAQ and GNA11. Interacts (via the DH domain) with POPDC1 (via the C-terminus cytoplasmic tail). Interacts with RHOA, CDC42 and RAC1. As to expression, highly expressed in excitable tissues, such as brain, heart and muscle. Elevated expression in hippocampus and cerebellum.

The protein resides in the cytoplasm. Its subcellular location is the myofibril. It is found in the sarcomere. It localises to the cell membrane. In terms of biological role, may play a role in actin cytoskeleton reorganization in different tissues since its activation induces formation of actin stress fibers. It works as a guanine nucleotide exchange factor for Rho family of small GTPases. Links specifically G alpha q/11-coupled receptors to RHOA activation. May be an important regulator of processes involved in axon and dendrite formation. In neurons seems to be an exchange factor primarily for RAC1. Involved in skeletal myogenesis. The protein is Rho guanine nucleotide exchange factor 25 (Arhgef25) of Mus musculus (Mouse).